The chain runs to 1021 residues: Solute carrier family 12 member 3 (1021 aa).

The Cytoplasmic portion of the chain corresponds to methionine 1–glycine 137. Phosphoserine is present on serine 43. Threonine 46 carries the post-translational modification Phosphothreonine; by OXSR1 and STK39. At serine 49 the chain carries Phosphoserine. Residue threonine 50 is modified to Phosphothreonine. Phosphothreonine; by OXSR1 and STK39 occurs at positions 55 and 60. The residue at position 73 (serine 73) is a Phosphoserine. At serine 91 the chain carries Phosphoserine; by OXSR1 and STK39. Position 124 is a phosphothreonine (threonine 124). Serine 126 is subject to Phosphoserine. A discontinuously helical membrane pass occupies residues tryptophan 138–glycine 167. A Na(+)-binding site is contributed by leucine 148. Asparagine 149 provides a ligand contact to polythiazide. Tryptophan 151 provides a ligand contact to Na(+). Residues isoleucine 168–isoleucine 189 traverse the membrane as a helical segment. Over serine 190–glycine 220 the chain is Cytoplasmic. Residues leucine 221–arginine 243 form a helical membrane-spanning segment. Asparagine 227 and histidine 234 together coordinate polythiazide. The Extracellular segment spans residues aspartate 244–aspartate 255. The next 2 membrane-spanning stretches (helical) occupy residues proline 256–glutamate 280 and tryptophan 281–glycine 303. Topologically, residues threonine 304–glycine 338 are extracellular. The discontinuously helical transmembrane segment at threonine 339–isoleucine 360 threads the bilayer. Residue threonine 352 participates in polythiazide binding. Glycine 353, isoleucine 354, and leucine 355 together coordinate chloride. Residue asparagine 359 participates in polythiazide binding. Over serine 361–isoleucine 371 the chain is Cytoplasmic. Residues proline 372–isoleucine 393 form a helical membrane-spanning segment. Residues glycine 394–phenylalanine 453 lie on the Extracellular side of the membrane. Asparagine 406 carries an N-linked (GlcNAc...) asparagine glycan. A disulfide bridge links cysteine 416 with cysteine 421. A glycan (N-linked (GlcNAc...) asparagine) is linked at asparagine 426. Cysteine 430 and cysteine 436 form a disulfide bridge. The chain crosses the membrane as a helical span at residues alanine 454 to alanine 477. Alanine 464, serine 467, and serine 468 together coordinate Na(+). The Cytoplasmic portion of the chain corresponds to lysine 478–arginine 507. The helical transmembrane segment at glycine 508–isoleucine 522 threads the bilayer. At alanine 523–threonine 527 the chain is on the extracellular side. The helical transmembrane segment at isoleucine 528 to asparagine 544 threads the bilayer. Tyrosine 540 contacts chloride. At phenylalanine 545 to lysine 567 the chain is on the cytoplasmic side. 2 consecutive transmembrane segments (helical) span residues tryptophan 568 to tryptophan 587 and alanine 588 to leucine 599. Topologically, residues leucine 600–glutamine 1021 are cytoplasmic. Residues serine 615 to glycine 630 are scissor helix. ATP is bound by residues leucine 648, arginine 655, valine 677, glycine 741, leucine 780, and asparagine 781.

Belongs to the SLC12A transporter family. Homodimer; adopts a domain-swap conformation at the scissor helices connecting the transmembrane domain and C-terminal domain. Interacts with KLHL3. Interacts with IL18R1; this interaction is increased by IL18 treatment. Post-translationally, ubiquitinated; ubiquitination is essential for regulation of endocytosis. The BCR(KLHL3) complex was initially identified as a candidate ubiquitin ligase for SLC12A3. However, it was later shown that it is not the case. In terms of processing, phosphorylated at Thr-46, Thr-55, Thr-60 and Ser-91 by OXSR1/OSR1 and STK39/SPAK downstream of WNK4, promoting its activity. Phosphorylated in response to IL18. As to expression, predominantly expressed in the kidney (at protein level). Localizes to the distal convoluted tubules (at protein level). Not detected in normal aorta, but abundantly expressed in fatty streaks and advanced atherosclerotic lesions (at protein level).

It localises to the cell membrane. Its subcellular location is the apical cell membrane. It catalyses the reaction chloride(out) + Na(+)(out) = chloride(in) + Na(+)(in). Phosphorylation by OXSR1/OSR1 and STK39/SPAK in kidney distal convoluted tubules downstream of WNK4 promotes its activity. Also activated by OXSR1/OSR1 and STK39/SPAK downstream of WNK3. Target of thiazide diuretics used in the treatment of high blood pressure. Thiazide drugs, such as polythiazide, specifically inhibit SLC12A3/NCC transporter activity by competing with chloride for binding and by locking SLC12A3/NCC in an outward-facing conformation. In terms of biological role, electroneutral sodium and chloride ion cotransporter, which acts as a key mediator of sodium and chloride reabsorption in kidney distal convoluted tubules. Also acts as a receptor for the pro-inflammatory cytokine IL18, thereby contributing to IL18-induced cytokine production, including IFNG, IL6, IL18 and CCL2. May act either independently of IL18R1, or in a complex with IL18R1. In Homo sapiens (Human), this protein is Solute carrier family 12 member 3.